The chain runs to 714 residues: A-kinase anchor protein 5 (714 aa).

Disordered regions lie at residues 1-146 and 243-333; these read METS…GYVR and VLEN…VGHT. An essential to the intracellular anchoring function region spans residues 1-164; the sequence is METSVSEIQI…EIKAQIQPDE (164 aa). 2 positions are modified to phosphoserine: Ser4 and Ser22. Over residues 10–32 the composition is skewed to basic and acidic residues; it reads IETKDEKRPEAASPQKERQERKT. Cys36 carries S-palmitoyl cysteine lipidation. Positions 37 to 50 are enriched in basic residues; sequence FKRRKKVNKKKAKA. 2 stretches are compositionally biased toward basic and acidic residues: residues 54-63 and 88-100; these read TAEETEKHAP and KPSE…KPSE. The AKAP CaM-binding signature appears at 74–94; sequence AGAWASIKRLVTHRKPSESAE. Cys123 is lipidated: S-palmitoyl cysteine. Positions 243-268 are enriched in polar residues; that stretch reads VLENSAADSPQPVTSTAPLSPATTHQ. Positions 285 to 301 are enriched in basic and acidic residues; the sequence is GKDDGRRKTAAEEKKSG. A 1; approximate repeat occupies 305 to 312; it reads LGQAEEAS. The tract at residues 305 to 597 is 28 X 8 AA repeats of V-G-Q-A-E-E-A-T; that stretch reads LGQAEEASSV…PIVGQAEETV (293 aa). Polar residues predominate over residues 310–323; that stretch reads EASSVSQADKSVLS. One copy of the 2; approximate repeat lies at 322–329; it reads LSQAEEAT. One copy of the 3; approximate repeat lies at 330–337; that stretch reads VGHTEEAT. A 4; approximate repeat occupies 350–357; the sequence is LSQAEEAT. A 5; approximate repeat occupies 358–365; that stretch reads VAQAKETV. One copy of the 6; approximate repeat lies at 366–373; it reads LSQAEEVK. One copy of the 7; approximate repeat lies at 398–405; that stretch reads VSQAEEAI. The stretch at 414–421 is one 8; approximate repeat; the sequence is MGQAEEAT. 5 repeat units span residues 430 to 437, 438 to 445, 446 to 453, 454 to 461, and 462 to 469. A 14; approximate repeat occupies 470–477; the sequence is VGQAGEAT. The stretch at 486-493 is one 15; approximate repeat; the sequence is VGQAEEAI. 4 repeat units span residues 494–501, 502–509, 510–517, and 518–525. The 20; approximate repeat unit spans residues 526–533; that stretch reads VDQAEEAT. The stretch at 534–541 is repeat 21; that stretch reads VGQAEEAT. One copy of the 22; approximate repeat lies at 542-549; it reads VGQAGEAA. The 23; approximate repeat unit spans residues 550–557; that stretch reads VGQAEEAI. Residues 558 to 565 form a 24; approximate repeat; it reads VAQAEEAT. The stretch at 566–573 is repeat 25; it reads VGQAGEAT. The stretch at 574–581 is one 26; approximate repeat; sequence VGQAEKAT. The stretch at 582-589 is one 27; approximate repeat; it reads VGQAEEPI. One copy of the 28; approximate repeat lies at 590–597; it reads VGQAEETV. Residues 675–696 form an RII-beta subunit binding domain region; that stretch reads YETLLIETASSLVKNAIELSVE. The segment at 697–714 is tethers NFATC2 to CRAC channels; that stretch reads QLVNEMVSEDNQINTLFQ.

As to quaternary structure, binding protein for dimer of the RII-beta regulatory subunit of cAMP-dependent protein kinase (PKA) and also for the protein kinase C (PKC) and the phosphatase calcineurin (PP2B). Each enzyme is inhibited when bound to the anchoring protein. Also binds the beta2-adrenergic receptor. Part of a complex containing AKAP5, ADCY5, ADCY6 and PDE4C. Interacts with ADCY8, and enhances its phosphorylation at lipid rafts. Interacts with ORAI1 (isoform alpha) (via N-terminus) upon store depletion and in response to LTC4. Does not interact with ORAI2 and ORAI3 paralogs. Interacts (via leucine zipper domain) with NFATC2/NFAT1. Interacts with calmodulin; the interaction is calcium-independent. Interacts with KCNQ2; the interaction may help KCNQ2 channel complex to retain calcium-bound calmodulin. Interacts with KCNK2; the channel is recruited to postsynaptic microdomains by AKAP5 where it can integrate neurotransmitter receptor signals. Part of a complex composed of AKAP5 and ADRB2. In terms of processing, palmitoylated. Palmitoylation at Cys-36 and Cys-123 plays a key role in the targeting of AKAP5 to lipid rafts. Palmitoylation by ZDHHC2 is required for AKAP5 function in LTP-stimulated recycling endosome exocytosis.

The protein localises to the postsynaptic recycling endosome membrane. Its subcellular location is the cell projection. The protein resides in the dendrite. It is found in the postsynaptic cell membrane. Its function is as follows. Multivalent scaffold protein that anchors the cAMP-dependent protein kinase/PKA to cytoskeletal and/or organelle-associated proteins, targeting the signal carried by cAMP to specific intracellular effectors. Association with the beta2-adrenergic receptor (beta2-AR) not only regulates beta2-AR signaling pathway, but also the activation by PKA by switching off the beta2-AR signaling cascade. Plays a role in long term synaptic potentiation by regulating protein trafficking from the dendritic recycling endosomes to the plasma membrane and controlling both structural and functional plasticity at excitatory synapses. In hippocampal pyramidal neurons, recruits KCNK2/TREK-1 channel at postsynaptic dense bodies microdomains and converts it to a leak channel no longer sensitive to stimulation by arachidonic acid, acidic pH or mechanical stress, nor inhibited by Gq-coupled receptors but still under the negative control of Gs-coupled receptors. Associates with ORAI1 pore-forming subunit of CRAC channels in Ca(2+) signaling microdomains where it recruits NFATC2/NFAT1 and couples store-operated Ca(2+) influx to calmodulin and calcineurin signaling and activation of NFAT-dependent transcriptional responses. The protein is A-kinase anchor protein 5 (Akap5) of Rattus norvegicus (Rat).